The following is a 240-amino-acid chain: MSELSYRRILLKLSGEALMGDGDYGIDPKVINRLAHEVIEAQQAGAQVALVIGGGNIFRGAGLAASGMDRVTGDHMGMLATVINALAMQDALEKLGAKVRVMSAIKINDVCEDFIRRRAIRHLEKGRIAIFAAGTGNPFFTTDSGAALRAIEIGADLLLKATKVDGVYDKDPKKHSDAVRYDSLTYDEVIMQGLEVMDTAAFALARDSDLPLRIFGMSEPGVLLRILHGAQIGTLVQGRS.

12 to 15 (KLSG) provides a ligand contact to ATP. Gly54 is a binding site for UMP. ATP-binding residues include Gly55 and Arg59. UMP is bound by residues Asp74 and 135 to 142 (TGNPFFTT). Positions 162, 168, and 171 each coordinate ATP.

The protein belongs to the UMP kinase family. In terms of assembly, homohexamer.

The protein localises to the cytoplasm. It catalyses the reaction UMP + ATP = UDP + ADP. Its pathway is pyrimidine metabolism; CTP biosynthesis via de novo pathway; UDP from UMP (UMPK route): step 1/1. Its activity is regulated as follows. Inhibited by UTP. Functionally, catalyzes the reversible phosphorylation of UMP to UDP. The polypeptide is Uridylate kinase (Xanthomonas campestris pv. campestris (strain ATCC 33913 / DSM 3586 / NCPPB 528 / LMG 568 / P 25)).